Consider the following 161-residue polypeptide: MIRQTKTIRVFLKPKSKMVFDNERTKEIRKKHPYWFVQGDLRVNKTAVIFFSDTQGKKGIPYVPVSPGKYQVEYYDDKIVITKLMTLQKIYTCLVFPISRKAYLLDEYTIVDSTAEKNAINIYFDRPMKYKKEKMSGTWYKYIFEEDISTYFMQAKARIKS.

This is an uncharacterized protein from Acidianus convivator (ATV).